We begin with the raw amino-acid sequence, 563 residues long: Germacrene-A synthase (563 aa).

Asp-316, Asp-320, Asp-460, Thr-464, and Glu-468 together coordinate Mg(2+). A DDXXD motif motif is present at residues 316-320 (DDTYD).

Belongs to the terpene synthase family. Tpsa subfamily. The cofactor is Mg(2+). Mn(2+) serves as cofactor. In terms of tissue distribution, high expression in disk florets, moderate expression in ray florets and detected in leaves and stems, but not in roots.

It catalyses the reaction (2E,6E)-farnesyl diphosphate = (+)-(R)-germacrene A + diphosphate. It participates in secondary metabolite biosynthesis; terpenoid biosynthesis. Functionally, sesquiterpene synthase involved in germacrene A biosynthesis. May be involved in the biosynthesis of the sesquiterpene lactone matricine, one of the major active compounds of chamomile flowers. This is Germacrene-A synthase from Matricaria chamomilla var. recutita (German chamomile).